The primary structure comprises 326 residues: MKFGLFFLNFQKDGITSEETLDNMVKTVTLIDSTKYHFNTAFVNEHHFSKNGIVGAPITAAGFLLGLTNKLHIGSLNQVITTHHPVRVAEEASLLDQMSEGRFILGFSDCESDFEMEFFRRHISSRQQQFEACYEIINDALTTGYCHPQNDFYDFPKVSINPHCYSENGPKQYVSATSKEVVMWAAKKALPLTFKWEDNLETKERYAILYNKTAQQYGIDISDVDHQLTVIANLNADRSTAQEEVREYLKDYITETYPQMDRDEKINCIIEENAVGSHDDYYESTKLAVEKTGSKNILLSFESMSDIKDVKDIIDMLNQKIEMNLP.

It belongs to the bacterial luciferase oxidoreductase family. As to quaternary structure, heterodimer of an alpha and a beta chain.

The enzyme catalyses a long-chain fatty aldehyde + FMNH2 + O2 = a long-chain fatty acid + hnu + FMN + H2O + 2 H(+). Functionally, light-emitting reaction in luminous bacteria. The specific role of the beta subunit is unknown, but it is absolutely required for bioluminescence activity. This Aliivibrio fischeri (Vibrio fischeri) protein is Alkanal monooxygenase beta chain (luxB).